Here is a 137-residue protein sequence, read N- to C-terminus: UPF0146 protein MJ0688 (137 aa).

It belongs to the UPF0146 family.

This Methanocaldococcus jannaschii (strain ATCC 43067 / DSM 2661 / JAL-1 / JCM 10045 / NBRC 100440) (Methanococcus jannaschii) protein is UPF0146 protein MJ0688.